Reading from the N-terminus, the 208-residue chain is Uracil phosphoribosyltransferase (208 aa).

5-phospho-alpha-D-ribose 1-diphosphate-binding positions include R78, R103, and 130-138 (DPMLATGGS). Uracil is bound by residues I193 and 198-200 (GDA). Position 199 (D199) interacts with 5-phospho-alpha-D-ribose 1-diphosphate.

Belongs to the UPRTase family. Requires Mg(2+) as cofactor.

The catalysed reaction is UMP + diphosphate = 5-phospho-alpha-D-ribose 1-diphosphate + uracil. It participates in pyrimidine metabolism; UMP biosynthesis via salvage pathway; UMP from uracil: step 1/1. Allosterically activated by GTP. In terms of biological role, catalyzes the conversion of uracil and 5-phospho-alpha-D-ribose 1-diphosphate (PRPP) to UMP and diphosphate. In Blochmanniella pennsylvanica (strain BPEN), this protein is Uracil phosphoribosyltransferase.